Consider the following 603-residue polypeptide: Shugoshin (603 aa).

A coiled-coil region spans residues 11–74 (HIQELQNILD…NVQLRSQVSL (64 aa)). 2 disordered regions span residues 112–164 (ESLP…RSST) and 201–227 (NEID…SNRR). Composition is skewed to low complexity over residues 146 to 157 (SVSTGSAHSTSS) and 201 to 214 (NEID…DNLL). A compositionally biased stretch (basic residues) spans 218–227 (PHKKRKSNRR). Residues 304-325 (KQDILDETEKRDTAVNQKKKLE) adopt a coiled-coil conformation. The interval 331–399 (PVEELSSSKN…ESVDFDRPRR (69 aa)) is disordered. The segment covering 362 to 376 (KVKHSMKSRKPKKNK) has biased composition (basic residues). The stretch at 431 to 451 (NIQDLQVKYKKSKKVLEKELK) forms a coiled coil. Residues 455-467 (KAMKSPKKNEKTF) show a composition bias toward basic and acidic residues. Disordered regions lie at residues 455 to 519 (KAMK…HSSF) and 583 to 603 (HNDT…KNKA). Low complexity predominate over residues 483-512 (RPSSTHSTSSVDAECSHNNSHSENINSSIN). Polar residues predominate over residues 583-593 (HNDTNKSSPKT). A compositionally biased stretch (basic residues) spans 594-603 (YRSRSRKNKA).

This sequence belongs to the shugoshin family.

Its subcellular location is the nucleus. It is found in the chromosome. It localises to the centromere. Functionally, plays a central role in chromosome cohesion during cell division by preventing premature dissociation of cohesin complex from centromeres after prophase, when most of cohesin complex dissociates from chromosomes arms. The protein is Shugoshin (SGO1) of Candida glabrata (strain ATCC 2001 / BCRC 20586 / JCM 3761 / NBRC 0622 / NRRL Y-65 / CBS 138) (Yeast).